We begin with the raw amino-acid sequence, 291 residues long: Ribosomal RNA small subunit methyltransferase A (291 aa).

S-adenosyl-L-methionine-binding residues include asparagine 29, leucine 31, glycine 56, glutamate 77, aspartate 102, and asparagine 127.

This sequence belongs to the class I-like SAM-binding methyltransferase superfamily. rRNA adenine N(6)-methyltransferase family. RsmA subfamily.

It is found in the cytoplasm. It carries out the reaction adenosine(1518)/adenosine(1519) in 16S rRNA + 4 S-adenosyl-L-methionine = N(6)-dimethyladenosine(1518)/N(6)-dimethyladenosine(1519) in 16S rRNA + 4 S-adenosyl-L-homocysteine + 4 H(+). Specifically dimethylates two adjacent adenosines (A1518 and A1519) in the loop of a conserved hairpin near the 3'-end of 16S rRNA in the 30S particle. May play a critical role in biogenesis of 30S subunits. This Geobacillus sp. (strain WCH70) protein is Ribosomal RNA small subunit methyltransferase A.